A 436-amino-acid chain; its full sequence is 3-ketoacyl-CoA thiolase (436 aa).

Cys99 acts as the Acyl-thioester intermediate in catalysis. Catalysis depends on proton acceptor residues His392 and Cys422.

It belongs to the thiolase-like superfamily. Thiolase family. Heterotetramer of two alpha chains (FadJ) and two beta chains (FadI).

The protein localises to the cytoplasm. It carries out the reaction an acyl-CoA + acetyl-CoA = a 3-oxoacyl-CoA + CoA. Its pathway is lipid metabolism; fatty acid beta-oxidation. In terms of biological role, catalyzes the final step of fatty acid oxidation in which acetyl-CoA is released and the CoA ester of a fatty acid two carbons shorter is formed. This is 3-ketoacyl-CoA thiolase from Photorhabdus laumondii subsp. laumondii (strain DSM 15139 / CIP 105565 / TT01) (Photorhabdus luminescens subsp. laumondii).